The following is an 884-amino-acid chain: Peroxidase-like protein 2 (884 aa).

6 disordered regions span residues 1-53, 78-188, 204-279, 653-695, 710-744, and 828-884; these read TTSC…RTKG, VHSK…SQGA, EKET…DDDD, PEIP…SATQ, DLQP…GAVG, and VGGM…SDTK. Residues 17–29 are compositionally biased toward polar residues; that stretch reads GTCNNVNKPTVGS. Residues 32-53 are compositionally biased toward basic and acidic residues; it reads DKFKRDVKPQYDDKKGDPRTKG. Low complexity predominate over residues 91-118; the sequence is KSSAVSPKMPSMGNLQSLGNLLSLGSVP. The span at 119–129 shows a compositional bias: pro residues; the sequence is VPAPAPAPEPV. 2 stretches are compositionally biased toward basic residues: residues 160–172 and 230–245; these read PKSK…KPKP and RTPK…QSIF. The segment covering 246 to 267 has biased composition (basic and acidic residues); sequence RRRDDRKDDRKGLRGTKGRRDD. Acidic residues predominate over residues 268–279; it reads SDDNDDSDDDDD. Over residues 828–856 the composition is skewed to gly residues; it reads VGGMGGSVGVGGSVGSGGSGGSRGAGGSG. Positions 865 to 884 are enriched in basic and acidic residues; it reads DDSKCSDDEKQKYCKNSDTK.

It belongs to the peroxidase family. In terms of tissue distribution, component of the acid-insoluble and acid-soluble organic matrix of calcified layers of the shell (at protein level).

The protein localises to the secreted. The polypeptide is Peroxidase-like protein 2 (Lottia gigantea (Giant owl limpet)).